Reading from the N-terminus, the 321-residue chain is Anthranilate phosphoribosyltransferase (321 aa).

5-phospho-alpha-D-ribose 1-diphosphate contacts are provided by residues Gly-72, 75 to 76, Thr-80, 82 to 85, 99 to 107, and Ser-111; these read GD, NVST, and KHGNVSVTS. Gly-72 contributes to the anthranilate binding site. Ser-84 lines the Mg(2+) pocket. Asn-102 provides a ligand contact to anthranilate. Position 157 (Arg-157) interacts with anthranilate. Mg(2+) contacts are provided by Asp-216 and Glu-217.

Belongs to the anthranilate phosphoribosyltransferase family. Homodimer. Mg(2+) is required as a cofactor.

The catalysed reaction is N-(5-phospho-beta-D-ribosyl)anthranilate + diphosphate = 5-phospho-alpha-D-ribose 1-diphosphate + anthranilate. It participates in amino-acid biosynthesis; L-tryptophan biosynthesis; L-tryptophan from chorismate: step 2/5. Catalyzes the transfer of the phosphoribosyl group of 5-phosphorylribose-1-pyrophosphate (PRPP) to anthranilate to yield N-(5'-phosphoribosyl)-anthranilate (PRA). This Methanococcus vannielii (strain ATCC 35089 / DSM 1224 / JCM 13029 / OCM 148 / SB) protein is Anthranilate phosphoribosyltransferase.